The chain runs to 171 residues: Shikimate kinase (171 aa).

Residue 14-19 (GAGKST) participates in ATP binding. Ser18 contributes to the Mg(2+) binding site. Asp36, Arg60, and Gly82 together coordinate substrate. Arg120 serves as a coordination point for ATP. Arg139 is a binding site for substrate. An ATP-binding site is contributed by Gln156.

The protein belongs to the shikimate kinase family. Monomer. The cofactor is Mg(2+).

Its subcellular location is the cytoplasm. The enzyme catalyses shikimate + ATP = 3-phosphoshikimate + ADP + H(+). The protein operates within metabolic intermediate biosynthesis; chorismate biosynthesis; chorismate from D-erythrose 4-phosphate and phosphoenolpyruvate: step 5/7. Functionally, catalyzes the specific phosphorylation of the 3-hydroxyl group of shikimic acid using ATP as a cosubstrate. This Psychromonas ingrahamii (strain DSM 17664 / CCUG 51855 / 37) protein is Shikimate kinase.